The following is a 553-amino-acid chain: Putative transport protein YidE (553 aa).

Helical transmembrane passes span 4 to 24, 28 to 48, 65 to 85, 95 to 115, and 158 to 178; these read IALT…IGNV, GVGL…HFVS, FGLI…FFAS, LFAV…HKLF, and MSYA…MWML. RCK C-terminal domains are found at residues 191–276 and 279–361; these read QQHE…VIGQ and DTSL…VLGN. 6 consecutive transmembrane segments (helical) span residues 371–391, 393–413, 439–459, 464–484, 493–513, and 533–553; these read MLPV…PVFV, GFPA…ALIL, IVLF…HTLV, LSWI…VGIL, YLTM…LAFA, and LVMF…WSIG.

Belongs to the AAE transporter (TC 2.A.81) family. YidE subfamily.

The protein resides in the cell membrane. In Escherichia coli O127:H6 (strain E2348/69 / EPEC), this protein is Putative transport protein YidE.